A 421-amino-acid polypeptide reads, in one-letter code: Zinc metalloproteinase-disintegrin-like crotastatin (421 aa).

In terms of domain architecture, Peptidase M12B spans 10-206 (KYVKLFLVAD…NMPQCILKKP (197 aa)). An N-linked (GlcNAc...) asparagine glycan is attached at Asn-29. Cystine bridges form between Cys-121/Cys-201, Cys-161/Cys-185, and Cys-163/Cys-168. A Zn(2+)-binding site is contributed by His-146. Residue Glu-147 is part of the active site. Zn(2+) contacts are provided by His-150 and His-156. In terms of domain architecture, Disintegrin spans 214 to 299 (PAVCGNYFVE…TECTDRFQRN (86 aa)). Ca(2+) contacts are provided by Val-216, Asn-219, Phe-221, Glu-223, Glu-226, and Asp-229. 14 disulfides stabilise this stretch: Cys-217–Cys-246, Cys-228–Cys-241, Cys-230–Cys-236, Cys-240–Cys-263, Cys-254–Cys-260, Cys-259–Cys-285, Cys-272–Cys-292, Cys-279–Cys-310, Cys-303–Cys-315, Cys-322–Cys-372, Cys-337–Cys-383, Cys-350–Cys-360, Cys-367–Cys-409, and Cys-403–Cys-414. The short motif at 278–280 (ECD) is the D/ECD-tripeptide element. Residues Asp-280, Met-281, Asp-283, Asp-294, and Arg-295 each contribute to the Ca(2+) site.

The protein belongs to the venom metalloproteinase (M12B) family. P-III subfamily. P-IIIc sub-subfamily. Homodimer; disulfide-linked. Zn(2+) serves as cofactor. In terms of tissue distribution, expressed by the venom gland.

It is found in the secreted. In terms of biological role, snake venom zinc metalloprotease that induces apoptosis in vascular endothelial cells (VEC), without degrading the extracellular matrix (it cannot cleave collagen) or inhibiting adhesion of VEC. Has also fibrinogenolytic and hemorrhagic activities. The polypeptide is Zinc metalloproteinase-disintegrin-like crotastatin (Crotalus durissus terrificus (South American rattlesnake)).